A 270-amino-acid polypeptide reads, in one-letter code: Sulfur carrier protein FdhD (270 aa).

The Cysteine persulfide intermediate role is filled by Cys116. Phe253 to Lys258 contacts Mo-bis(molybdopterin guanine dinucleotide).

This sequence belongs to the FdhD family.

The protein resides in the cytoplasm. Functionally, required for formate dehydrogenase (FDH) activity. Acts as a sulfur carrier protein that transfers sulfur from IscS to the molybdenum cofactor prior to its insertion into FDH. The protein is Sulfur carrier protein FdhD of Haemophilus influenzae (strain ATCC 51907 / DSM 11121 / KW20 / Rd).